The chain runs to 117 residues: LYR motif-containing protein 1 (117 aa).

The protein belongs to the complex I LYR family.

The polypeptide is LYR motif-containing protein 1 (lyrm1) (Dictyostelium discoideum (Social amoeba)).